The chain runs to 709 residues: Leucine-rich repeat and calponin homology domain-containing protein 1 (709 aa).

Residues 24-37 (LHQHHQHHQHHQHH) show a composition bias toward basic residues. The segment at 24-49 (LHQHHQHHQHHQHHGGTGGTGFNLPL) is disordered. 9 LRR repeats span residues 60–83 (AANS…TAPG), 86–108 (LSDT…ELCQ), 109–131 (FVSL…AIVN), 132–155 (LQML…LCGL), 157–176 (LKVL…EIGQ), 177–199 (LKQL…QIGQ), 200–223 (LKSL…LVDL), 225–244 (LVKF…CFRE), and 245–268 (MKQL…ICTK). Basic and acidic residues-rich tracts occupy residues 301-312 (HQHVEDSKKDSD) and 381-390 (QEREQLAGRA). The segment at 301 to 390 (HQHVEDSKKD…QEREQLAGRA (90 aa)) is disordered. Residues Ser-395, Ser-518, and Ser-522 each carry the phosphoserine modification. Residues 504–526 (SNGSQYSPNEIRENSPSVSPTAN) are disordered. A Phosphothreonine modification is found at Thr-581. A Calponin-homology (CH) domain is found at 589-702 (MREEKELVEQ…TTVQALLDVT (114 aa)).

Interacts (via LRR repeats) with unphosphorylated DOCK8 (via DHR-2 domain); the interaction prevents the association between DOCK8 and CDC42.

It is found in the cytoplasm. Functionally, acts as a negative regulator of GTPase CDC42 by sequestering CDC42-guanine exchange factor DOCK8. Probably by preventing CDC42 activation, negatively regulates CD4(+) T-cell migration in response to chemokine stimulation. The sequence is that of Leucine-rich repeat and calponin homology domain-containing protein 1 (Lrch1) from Mus musculus (Mouse).